A 200-amino-acid polypeptide reads, in one-letter code: Riboflavin kinase (200 aa).

A disordered region spans residues 1–20 (MATARPSIVGPDSGPESPFP). Residues Thr-42 and Asn-44 each coordinate Mg(2+). The active-site Nucleophile is the Glu-110.

It belongs to the flavokinase family. Requires Zn(2+) as cofactor. Mg(2+) is required as a cofactor.

It catalyses the reaction riboflavin + ATP = FMN + ADP + H(+). It functions in the pathway cofactor biosynthesis; FMN biosynthesis; FMN from riboflavin (ATP route): step 1/1. Catalyzes the phosphorylation of riboflavin (vitamin B2) to form flavin mononucleotide (FMN) coenzyme. The protein is Riboflavin kinase (FMN1) of Pyricularia oryzae (strain 70-15 / ATCC MYA-4617 / FGSC 8958) (Rice blast fungus).